Reading from the N-terminus, the 212-residue chain is Pyridoxine/pyridoxamine 5'-phosphate oxidase (212 aa).

Residues 8–11 (RREY) and Lys66 contribute to the substrate site. FMN contacts are provided by residues 61-66 (RIVLLK), 76-77 (FT), Arg82, Lys83, and Gln105. Substrate contacts are provided by Tyr123, Arg127, and Ser131. Residues 140–141 (QS) and Trp185 each bind FMN. Position 191 to 193 (191 to 193 (RLH)) interacts with substrate. Arg195 contributes to the FMN binding site.

It belongs to the pyridoxamine 5'-phosphate oxidase family. As to quaternary structure, homodimer. Requires FMN as cofactor.

It catalyses the reaction pyridoxamine 5'-phosphate + O2 + H2O = pyridoxal 5'-phosphate + H2O2 + NH4(+). The enzyme catalyses pyridoxine 5'-phosphate + O2 = pyridoxal 5'-phosphate + H2O2. It functions in the pathway cofactor metabolism; pyridoxal 5'-phosphate salvage; pyridoxal 5'-phosphate from pyridoxamine 5'-phosphate: step 1/1. Its pathway is cofactor metabolism; pyridoxal 5'-phosphate salvage; pyridoxal 5'-phosphate from pyridoxine 5'-phosphate: step 1/1. Catalyzes the oxidation of either pyridoxine 5'-phosphate (PNP) or pyridoxamine 5'-phosphate (PMP) into pyridoxal 5'-phosphate (PLP). This Shewanella baltica (strain OS155 / ATCC BAA-1091) protein is Pyridoxine/pyridoxamine 5'-phosphate oxidase.